The following is a 698-amino-acid chain: Protein arginine N-methyltransferase 7 (698 aa).

2 SAM-dependent MTase PRMT-type domains span residues 14–357 (QNTW…YSLW) and 366–698 (EKPA…EKSE).

It belongs to the class I-like SAM-binding methyltransferase superfamily. Protein arginine N-methyltransferase family. PRMT7 subfamily.

Functionally, essential arginine methyltransferase that can both catalyze the formation of omega-N monomethylarginine (MMA) and symmetrical dimethylarginine (sDMA). Specifically mediates the symmetrical dimethylation of arginine residues in the small nuclear ribonucleoproteins SmD1 and SmD3. This is Protein arginine N-methyltransferase 7 (Art7) from Drosophila mojavensis (Fruit fly).